The chain runs to 1063 residues: Structural polyprotein (1063 aa).

The segment at Met1–Ala131 is disordered. Positions Gly30 to Gly69 are human C1QBP/SF2P32-binding. Ser46 carries the post-translational modification Phosphoserine; by host. Positions Pro59–Gly69 are enriched in basic residues. Over residues Gln70–Thr87 the composition is skewed to basic and acidic residues. The segment covering Ala93–Pro107 has biased composition (pro residues). A disulfide bridge links Cys153 with Cys197. The functions as E2 signal peptide stretch occupies residues Gly279–Ala300. Topologically, residues Gly301 to Ser534 are extracellular. Residues Asn353, Asn371, Asn410, and Asn429 are each glycosylated (N-linked (GlcNAc...) asparagine; by host). A helical transmembrane segment spans residues Leu535–Cys555. Over Arg556 to Gly582 the chain is Cytoplasmic. The tract at residues Gly563–Gly582 is functions as E1 signal peptide. Topologically, residues Glu583–His1028 are extracellular. 8 cysteine pairs are disulfide-bonded: Cys590–Cys595, Cys619–Cys824, Cys641–Cys653, Cys699–Cys712, Cys758–Cys767, Cys807–Cys817, Cys931–Cys934, and Cys950–Cys983. The N-linked (GlcNAc...) asparagine; by host glycan is linked to Asn658. Asn670 and Ala671 together coordinate Ca(2+). Residues Asp718 and Thr719 each coordinate Ca(2+). 2 N-linked (GlcNAc...) asparagine; by host glycosylation sites follow: Asn759 and Asn791. Thr1011 and Thr1012 each carry an O-linked (GalNAc...) threonine; by host glycan. A helical membrane pass occupies residues Trp1029 to Cys1049. At Ala1050 to Arg1063 the chain is on the extracellular side.

Homodimer; further assembles into homooligomer. Interacts with human C1QBP. Interacts (via N-terminus) with protease/methyltransferase p150. In terms of assembly, heterodimer with spike glycoprotein E2. As to quaternary structure, heterodimer with spike glycoprotein E1. In terms of processing, structural polyprotein: Specific enzymatic cleavages in vivo yield mature proteins. Two signal peptidase-mediated cleavages within the polyprotein produce the structural proteins capsid, E2, and E1. The E2 signal peptide remains attached to the C-terminus of the capsid protein after cleavage by the signal peptidase. Another signal peptide at E2 C-terminus directs E1 to the ER, with a similar mechanism. Contains three N-linked oligosaccharides. Post-translationally, capsid is phosphorylated on Ser-46 by host. This phosphorylation negatively regulates capsid protein RNA-binding activity. Dephosphorylated by human PP1A.

The protein localises to the virion. Its subcellular location is the host cytoplasm. The protein resides in the host mitochondrion. It is found in the virion membrane. It localises to the host Golgi apparatus membrane. In terms of biological role, capsid protein interacts with genomic RNA and assembles into icosahedric core particles 65-70 nm in diameter. The resulting nucleocapsid eventually associates with the cytoplasmic domain of E2 at the cell membrane, leading to budding and formation of mature virions from host Golgi membranes. Phosphorylation negatively regulates RNA-binding activity, possibly delaying virion assembly during the viral replication phase. Capsid protein dimerizes and becomes disulfide-linked in the virion. Modulates genomic RNA replication. Modulates subgenomic RNA synthesis by interacting with human C1QBP/SF2P32. Induces both perinuclear clustering of mitochondria and the formation of electron-dense intermitochondrial plaques, both hallmarks of rubella virus infected cells. Induces apoptosis when expressed in transfected cells. Responsible for viral attachment to target host cell, by binding to the cell receptor. Its transport to the plasma membrane depends on interaction with E1 protein. The surface glycoproteins display an irregular helical organization and a pseudo-tetrameric inner nucleocapsid arrangement. Its function is as follows. Class II viral fusion protein. Fusion activity is inactive as long as E1 is bound to E2 in mature virion. After virus attachment to target cell and clathrin-mediated endocytosis, acidification of the endosome would induce dissociation of E1/E2 heterodimer and concomitant trimerization of the E1 subunits. This E1 homotrimer is fusion active, and promotes release of viral nucleocapsid in cytoplasm after endosome and viral membrane fusion. The cytoplasmic tail of spike glycoprotein E1 modulates virus release. The surface glycoproteins display an irregular helical organization and a pseudo-tetrameric inner nucleocapsid arrangement. The protein is Structural polyprotein of Homo sapiens (Human).